Consider the following 198-residue polypeptide: Transcription factor LBX2 (198 aa).

Disordered stretches follow at residues 24 to 46 (MVPRAPSAPQLPESGPGPTSPLC), 63 to 89 (ALQPSEGRAGPDALGPGPFGRKRRKSR), and 173 to 198 (DPGLCLGPAGPDSRPHLSDEEIQVDD). Positions 85-144 (RRKSRTAFTAQQVLELERRFVFQKYLAPSERDGLATRLGLANAQVVTWFQNRRAKLKRDV) form a DNA-binding region, homeobox.

It is found in the nucleus. Functionally, transcription factor. In Homo sapiens (Human), this protein is Transcription factor LBX2 (LBX2).